The chain runs to 126 residues: Arginine decarboxylase proenzyme (126 aa).

S74 acts as the Schiff-base intermediate with substrate; via pyruvic acid in catalysis. Pyruvic acid (Ser); by autocatalysis is present on S74. Catalysis depends on H79, which acts as the Proton acceptor; for processing activity. Catalysis depends on C94, which acts as the Proton donor; for catalytic activity.

This sequence belongs to the prokaryotic AdoMetDC family. Type 1 subfamily. In terms of assembly, heterooctamer of four alpha and four beta chains arranged as a tetramer of alpha/beta heterodimers. Pyruvate is required as a cofactor. Is synthesized initially as an inactive proenzyme. Formation of the active enzyme involves a self-maturation process in which the active site pyruvoyl group is generated from an internal serine residue via an autocatalytic post-translational modification. Two non-identical subunits are generated from the proenzyme in this reaction, and the pyruvate is formed at the N-terminus of the alpha chain, which is derived from the carboxyl end of the proenzyme. The post-translation cleavage follows an unusual pathway, termed non-hydrolytic serinolysis, in which the side chain hydroxyl group of the serine supplies its oxygen atom to form the C-terminus of the beta chain, while the remainder of the serine residue undergoes an oxidative deamination to produce ammonia and the pyruvoyl group blocking the N-terminus of the alpha chain.

The catalysed reaction is L-arginine + H(+) = agmatine + CO2. The protein operates within amine and polyamine biosynthesis; agmatine biosynthesis; agmatine from L-arginine: step 1/1. In terms of biological role, specifically catalyzes the decarboxylation of L-arginine to agmatine. Has no S-adenosylmethionine decarboxylase (AdoMetDC) activity. The polypeptide is Arginine decarboxylase proenzyme (Pyrobaculum calidifontis (strain DSM 21063 / JCM 11548 / VA1)).